The following is a 168-amino-acid chain: Shikimate kinase (168 aa).

11–16 contributes to the ATP binding site; that stretch reads GAGKTT. Threonine 15 contacts Mg(2+). Substrate contacts are provided by aspartate 33, arginine 57, and glycine 78. Arginine 118 contacts ATP. Arginine 136 lines the substrate pocket. Arginine 153 is an ATP binding site.

It belongs to the shikimate kinase family. As to quaternary structure, monomer. Mg(2+) serves as cofactor.

It localises to the cytoplasm. The enzyme catalyses shikimate + ATP = 3-phosphoshikimate + ADP + H(+). Its pathway is metabolic intermediate biosynthesis; chorismate biosynthesis; chorismate from D-erythrose 4-phosphate and phosphoenolpyruvate: step 5/7. Its function is as follows. Catalyzes the specific phosphorylation of the 3-hydroxyl group of shikimic acid using ATP as a cosubstrate. The sequence is that of Shikimate kinase from Enterococcus faecalis (strain ATCC 700802 / V583).